A 153-amino-acid polypeptide reads, in one-letter code: Methylglyoxal synthase (153 aa).

One can recognise an MGS-like domain in the interval 6 to 153; the sequence is RTIAARKHIA…QRYLAERLPS (148 aa). Substrate-binding positions include His-19, Lys-23, 45–48, and 65–66; these read TGTT and SG. The active-site Proton donor/acceptor is Asp-71. A substrate-binding site is contributed by His-98.

This sequence belongs to the methylglyoxal synthase family.

It catalyses the reaction dihydroxyacetone phosphate = methylglyoxal + phosphate. Its function is as follows. Catalyzes the formation of methylglyoxal from dihydroxyacetone phosphate. This is Methylglyoxal synthase from Sodalis glossinidius (strain morsitans).